A 409-amino-acid polypeptide reads, in one-letter code: Peptidase T (409 aa).

Histidine 78 is a Zn(2+) binding site. Aspartate 80 is a catalytic residue. Aspartate 141 contributes to the Zn(2+) binding site. The active-site Proton acceptor is the glutamate 175. Zn(2+)-binding residues include glutamate 176, aspartate 198, and histidine 380.

This sequence belongs to the peptidase M20B family. Zn(2+) is required as a cofactor.

Its subcellular location is the cytoplasm. The enzyme catalyses Release of the N-terminal residue from a tripeptide.. Functionally, cleaves the N-terminal amino acid of tripeptides. The chain is Peptidase T from Caldanaerobacter subterraneus subsp. tengcongensis (strain DSM 15242 / JCM 11007 / NBRC 100824 / MB4) (Thermoanaerobacter tengcongensis).